Reading from the N-terminus, the 442-residue chain is Putative pyrimidine permease RutG (442 aa).

The Cytoplasmic portion of the chain corresponds to 1-57 (MAMFGFPHWQLKSTSTESGVVAPDERLPFAQTAVMGVQHAVAMFGATVLMPILMGLD). A helical transmembrane segment spans residues 58-78 (PNLSILMSGIGTLLFFFITGG). Position 79 (R79) is a topological domain, periplasmic. The chain crosses the membrane as a helical span at residues 80–100 (VPSYLGSSAAFVGVVIAATGF). At 101–110 (NGQGINPNIS) the chain is on the cytoplasmic side. Residues 111-131 (IALGGIIACGLVYTVIGLVVM) traverse the membrane as a helical segment. At 132 to 140 (KIGTRWIER) the chain is on the periplasmic side. A helical transmembrane segment spans residues 141–161 (LMPPVVTGAVVMAIGLNLAPI). Topologically, residues 162–169 (AVKSVSAS) are cytoplasmic. A helical membrane pass occupies residues 170 to 190 (AFDSWMAVMTVLCIGLVAVFT). Topologically, residues 191 to 196 (RGMIQR) are periplasmic. Residues 197 to 217 (LLILVGLIVACLLYGVMTNVL) traverse the membrane as a helical segment. Residues 218-240 (GLGKAVDFTLVSHAAWFGLPHFS) are Cytoplasmic-facing. Residues 241-261 (TPAFNGQAMMLIAPVAVILVA) form a helical membrane-spanning segment. The Periplasmic segment spans residues 262–284 (ENLGHLKAVAGMTGRNMDPYMGR). Residues 285–305 (AFVGDGLATMLSGSVGGSGVT) form a helical membrane-spanning segment. Residues 306–318 (TYAENIGVMAVTK) are Cytoplasmic-facing. The helical transmembrane segment at 319-339 (VYSTLVFVAAAVIAMLLGFSP) threads the bilayer. At 340-347 (KFGALIHT) the chain is on the periplasmic side. Residues 348-368 (IPAAVIGGASIVVFGLIAVAG) form a helical membrane-spanning segment. The Cytoplasmic segment spans residues 369-385 (ARIWVQNRVDLSQNGNL). A run of 2 helical transmembrane segments spans residues 386–406 (IMVA…LGGF) and 407–427 (TLGG…LLSR). Residues 428–442 (KLVDVPPPEVVHQEP) are Cytoplasmic-facing.

This sequence belongs to the nucleobase:cation symporter-2 (NCS2) (TC 2.A.40) family.

It is found in the cell inner membrane. Functionally, may function as a proton-driven pyrimidine uptake system. The sequence is that of Putative pyrimidine permease RutG (rutG) from Escherichia coli (strain K12).